A 326-amino-acid polypeptide reads, in one-letter code: uncharacterized protein (326 aa).

Solcar repeat units lie at residues 15–106, 114–215, and 234–322; these read EFLV…VRRV, ETHA…ATDF, and LKTW…SKAL. A run of 6 helical transmembrane segments spans residues 16–36, 83–103, 120–140, 191–211, 240–260, and 294–314; these read FLVK…SVVA, TATL…YEQV, FLSG…LELI, FSVT…AYDL, LLCG…FEVC, and FFVG…TSFF.

This sequence belongs to the mitochondrial carrier (TC 2.A.29) family.

The protein localises to the mitochondrion inner membrane. This is an uncharacterized protein from Schizosaccharomyces pombe (strain 972 / ATCC 24843) (Fission yeast).